The following is a 362-amino-acid chain: Glutaminase-asparaginase (362 aa).

The first 25 residues, 1-25 (MKSALKTFVPGALALLLLFPVAAQA), serve as a signal peptide directing secretion. The Asparaginase/glutaminase domain maps to 35-362 (ANVVILATGG…KELQRMFWEY (328 aa)). Threonine 45 (acyl-ester intermediate) is an active-site residue. Residues serine 92 and 125-126 (TD) contribute to the substrate site.

Belongs to the asparaginase 1 family. Homotetramer.

The protein resides in the periplasm. The enzyme catalyses L-glutamine + H2O = L-glutamate + NH4(+). It catalyses the reaction L-asparagine + H2O = L-aspartate + NH4(+). The protein is Glutaminase-asparaginase of Pseudomonas fluorescens biotype A.